A 704-amino-acid chain; its full sequence is ATP-dependent zinc metalloprotease FtsH (704 aa).

The Cytoplasmic segment spans residues 1–17 (MADSAKTPRGKKRRPFT). Residues 18–38 (GLALWIIVALLLGMAMFSLFG) traverse the membrane as a helical segment. Residues 39–127 (RDGYQQIDTQ…DEIASSSWWS (89 aa)) lie on the Extracellular side of the membrane. Residues 128–148 (TLLLSFLPLLIFIGLFWFLIM) form a helical membrane-spanning segment. Over 149 to 704 (NAQGGGKAMQ…GSAGTDGTGR (556 aa)) the chain is Cytoplasmic. 217–224 (GPPGTGKT) contributes to the ATP binding site. His-439 is a Zn(2+) binding site. Glu-440 is an active-site residue. Residues His-443 and Asp-515 each coordinate Zn(2+). A disordered region spans residues 624–704 (PREVWISSTE…GSAGTDGTGR (81 aa)). The span at 681–704 (PHGGEPGGGGYGYDGSAGTDGTGR) shows a compositional bias: gly residues.

The protein in the central section; belongs to the AAA ATPase family. In the C-terminal section; belongs to the peptidase M41 family. As to quaternary structure, homohexamer. Requires Zn(2+) as cofactor.

The protein localises to the cell membrane. Its function is as follows. Acts as a processive, ATP-dependent zinc metallopeptidase for both cytoplasmic and membrane proteins. Plays a role in the quality control of integral membrane proteins. The sequence is that of ATP-dependent zinc metalloprotease FtsH from Brachybacterium faecium (strain ATCC 43885 / DSM 4810 / JCM 11609 / LMG 19847 / NBRC 14762 / NCIMB 9860 / 6-10).